The primary structure comprises 558 residues: SPATS2-like protein (558 aa).

At Ala-2 the chain carries N-acetylalanine. The segment covering 63 to 79 has biased composition (basic residues); sequence GKKKNNKRKRSKSKQHQ. 2 disordered regions span residues 63-134 and 157-201; these read GKKK…EKKI and KLSL…KSNT. Residues 80 to 92 are compositionally biased toward basic and acidic residues; it reads GNKDAKDKVERPE. Phosphoserine is present on Ser-120. The stretch at 271 to 344 forms a coiled coil; sequence LMAEMDKVKE…ARFSCDIEQL (74 aa). Residues 380–525 form a disordered region; it reads TSGKQSNFSR…DTSEARPFRG (146 aa). Composition is skewed to polar residues over residues 381-390, 410-432, and 440-456; these read SGKQSNFSRK, SLPS…GSSN, and QYHN…QGSG. Ser-455 carries the phosphoserine modification. Positions 469–485 are enriched in basic residues; sequence HEHRRQPHNGFRPKNKG. The segment covering 513 to 522 has biased composition (basic and acidic residues); the sequence is HAADTSEARP.

The protein belongs to the SPATS2 family.

The protein resides in the cytoplasm. It localises to the nucleus. The protein localises to the nucleolus. The protein is SPATS2-like protein (SPATS2L) of Homo sapiens (Human).